The sequence spans 426 residues: 5-methylthioadenosine/S-adenosylhomocysteine deaminase (426 aa).

Zn(2+)-binding residues include histidine 60 and histidine 62. The substrate site is built by glutamate 89 and histidine 179. Residue histidine 206 coordinates Zn(2+). The substrate site is built by glutamate 209 and aspartate 294. Position 294 (aspartate 294) interacts with Zn(2+).

This sequence belongs to the metallo-dependent hydrolases superfamily. MTA/SAH deaminase family. It depends on Zn(2+) as a cofactor.

It catalyses the reaction S-adenosyl-L-homocysteine + H2O + H(+) = S-inosyl-L-homocysteine + NH4(+). It carries out the reaction S-methyl-5'-thioadenosine + H2O + H(+) = S-methyl-5'-thioinosine + NH4(+). In terms of biological role, catalyzes the deamination of 5-methylthioadenosine and S-adenosyl-L-homocysteine into 5-methylthioinosine and S-inosyl-L-homocysteine, respectively. Is also able to deaminate adenosine. This is 5-methylthioadenosine/S-adenosylhomocysteine deaminase from Dictyoglomus thermophilum (strain ATCC 35947 / DSM 3960 / H-6-12).